A 509-amino-acid chain; its full sequence is Tyrosine-protein phosphatase non-receptor type substrate 1 (509 aa).

An N-terminal signal peptide occupies residues 1–31 (MEPAGPAPGRLGPLLFCLLLSASCFCAGASG). In terms of domain architecture, Ig-like V-type spans 32–138 (KELKVTQADK…IVEPDTEIKS (107 aa)). Topologically, residues 32–373 (KELKVTQADK…PDNNAYYNWN (342 aa)) are extracellular. N54, N93, N169, N181, N205, N209, N242, N246, N271, N293, N312, N320, and N345 each carry an N-linked (GlcNAc...) asparagine glycan. An intrachain disulfide couples C55 to C122. Ig-like C1-type domains lie at 150–248 (PSSP…ANFS) and 255–349 (PTLK…HTVR). The cysteines at positions 172 and 229 are disulfide-linked. A disulfide bridge links C274 with C332. Residues 374-394 (VFIGVGVACALLVVLLMAALY) traverse the membrane as a helical segment. Topologically, residues 395-509 (LLRIKQKKAK…EYASVQVQRK (115 aa)) are cytoplasmic. At Y436 the chain carries Phosphotyrosine; by Tyr-kinases. The SH2-binding motif lies at 436 to 439 (YADL). Residues 441–472 (LPKEKKPAPRVPEPNNHTEYASIETGKLPRPE) are disordered. The short motif at 446-451 (KPAPRV) is the SH3-binding element. 3 positions are modified to phosphotyrosine; by Tyr-kinases: Y460, Y477, and Y501. 3 short sequence motifs (SH2-binding) span residues 460–463 (YASI), 477–480 (YADL), and 501–504 (YASV). Positions 485–509 (LNRAQPTPKPEPSFSEYASVQVQRK) are disordered. The span at 500 to 509 (EYASVQVQRK) shows a compositional bias: polar residues.

Binds PTPN11 when tyrosine-phosphorylated, except in macrophages, where it primarily binds PTPN6. Binds GRB2 in vitro. Binds FGR. Binds JAK2 irrespective of its phosphorylation status and forms a stable complex. Binds SCAP1 and/or SCAP2. The resulting complex recruits FYB1. Binds PTK2B. Interacts with TRIM2. N-glycosylated. Post-translationally, phosphorylated on tyrosine residues in response to insulin, cell adhesion or epidermal growth factors. Dephosphorylated by PTPN11. In terms of tissue distribution, highly expressed in brain, spleen, lung, liver and kidney. Detected at lower levels in heart. Highly expressed in alveolar and peritoneal macrophages, and at lower levels in dendritic cells.

The protein localises to the membrane. Functionally, immunoglobulin-like cell surface receptor for CD47. Acts as docking protein and induces translocation of PTPN6, PTPN11 and other binding partners from the cytosol to the plasma membrane. Supports adhesion of cerebellar neurons, neurite outgrowth and glial cell attachment. May play a key role in intracellular signaling during synaptogenesis and in synaptic function. Involved in the negative regulation of receptor tyrosine kinase-coupled cellular responses induced by cell adhesion, growth factors or insulin. Mediates negative regulation of phagocytosis, mast cell activation and dendritic cell activation. CD47 binding prevents maturation of immature dendritic cells and inhibits cytokine production by mature dendritic cells. Plays a role in antiviral immunity and limits new world arenavirus infection by decreasing virus internalization. Receptor for THBS1. Interaction with THBS1 stimulates phosphorylation of SIRPA. In response to THBS1, involved in ROS signaling in non-phagocytic cells, stimulating NADPH oxidase-derived ROS production. This Rattus norvegicus (Rat) protein is Tyrosine-protein phosphatase non-receptor type substrate 1 (Sirpa).